The sequence spans 1318 residues: DNA-directed RNA polymerase subunit beta' (1318 aa).

Zn(2+) is bound by residues cysteine 221, cysteine 295, cysteine 302, and cysteine 305.

This sequence belongs to the RNA polymerase beta' chain family. RpoC2 subfamily. In terms of assembly, in cyanobacteria the RNAP catalytic core is composed of 2 alpha, 1 beta, 1 beta', 1 gamma and 1 omega subunit. When a sigma factor is associated with the core the holoenzyme is formed, which can initiate transcription. Zn(2+) serves as cofactor.

The enzyme catalyses RNA(n) + a ribonucleoside 5'-triphosphate = RNA(n+1) + diphosphate. Functionally, DNA-dependent RNA polymerase catalyzes the transcription of DNA into RNA using the four ribonucleoside triphosphates as substrates. The sequence is that of DNA-directed RNA polymerase subunit beta' from Synechococcus elongatus (strain ATCC 33912 / PCC 7942 / FACHB-805) (Anacystis nidulans R2).